Consider the following 58-residue polypeptide: uncharacterized protein (58 aa).

Over residues 23–51 (TTTSTSTTTTSTTTSTTTSTTTTTTTTTT) the composition is skewed to low complexity. The segment at 23-58 (TTTSTSTTTTSTTTSTTTSTTTTTTTTTTKDFNTET) is disordered.

This is an uncharacterized protein from Dictyostelium discoideum (Social amoeba).